Consider the following 214-residue polypeptide: Cysteine-rich venom protein LEI1 (214 aa).

A signal peptide spans Met1–Gly18. The SCP domain occupies Val37 to Tyr165. 5 disulfides stabilise this stretch: Cys74-Cys152, Cys91-Cys166, Cys147-Cys163, Cys185-Cys192, and Cys188-Cys197. One can recognise a ShKT domain in the interval Cys201–Val214.

This sequence belongs to the CRISP family. Expressed by the venom gland.

It is found in the secreted. In terms of biological role, blocks contraction of smooth muscle elicited by high potassium-induced depolarization, but does not block caffeine-stimulated contraction. May target voltage-gated calcium channels on smooth muscle. The chain is Cysteine-rich venom protein LEI1 from Leioheterodon madagascariensis (Malagasy giant hognose snake).